The chain runs to 623 residues: MSMQIKRYPTLDLADNPIKLRLLPKESLLTLCDELRQFLLTSVSGSSGHFASGLGTVELTVALHYVYNTPFDNVIWDVGHQAYPHKILTGRRECIATIRQRNGLHPFPWREESEYDILSVGHSSTSISAGLGMAVAATYEGIGRKTVCVIGDGAMTAGMAFEALNHAGDIKSDLLVILNDNKMSISRNVGALNNHLAQILSGKLYLRINESSKKALHGMPYLKELAKRTKEQIKNIIVPNCTLFEELGFNYIGPVDGHDVQGMVHILKNMRCMKGPQLLHIITQKGRGYAPAEKDPTTWHAVPKFDPAIGQLPYQNISNYPTYSDVFGDWLCNAATSNKKLIAITPAMREGSGMAKFANQFPQQYFDVAIAEQHAVTFAAGLAISGYKPVVAIYSTFLQRAYDQVIHDVAIQKLPVLFAIDRGGVVGADGQTHQGAFDLSYLRCVPNMVIMTPSDENECRLMLHTGYHYNNGPSAVRYPRGNGIGVEYSLLRILPLGKAIVCRQGTKIAILNFGTLLTQAKKVAKTFDATLVDMRFVKPLDIELINQLAISHQALVTLEENAVIGGAGSGVNEYLMRQRLLVPVLNIGLPDYFIPQGSQEEIRAELKLDSDGIMEQIKQWLAR.

Residues His-80 and 121 to 123 (GHS) contribute to the thiamine diphosphate site. Asp-152 is a Mg(2+) binding site. Thiamine diphosphate-binding positions include 153-154 (GA), Asn-181, Tyr-289, and Glu-372. Mg(2+) is bound at residue Asn-181.

This sequence belongs to the transketolase family. DXPS subfamily. Homodimer. The cofactor is Mg(2+). Thiamine diphosphate is required as a cofactor.

It carries out the reaction D-glyceraldehyde 3-phosphate + pyruvate + H(+) = 1-deoxy-D-xylulose 5-phosphate + CO2. It functions in the pathway metabolic intermediate biosynthesis; 1-deoxy-D-xylulose 5-phosphate biosynthesis; 1-deoxy-D-xylulose 5-phosphate from D-glyceraldehyde 3-phosphate and pyruvate: step 1/1. Functionally, catalyzes the acyloin condensation reaction between C atoms 2 and 3 of pyruvate and glyceraldehyde 3-phosphate to yield 1-deoxy-D-xylulose-5-phosphate (DXP). This chain is 1-deoxy-D-xylulose-5-phosphate synthase, found in Baumannia cicadellinicola subsp. Homalodisca coagulata.